A 300-amino-acid polypeptide reads, in one-letter code: Tyrosine recombinase XerC (300 aa).

Residues 1-86 (MESVLDAFDQ…AVKTFTAWAV (86 aa)) enclose the Core-binding (CB) domain. The Tyr recombinase domain occupies 107–294 (TLPAVLRQDQ…TVARLRAVHD (188 aa)). Catalysis depends on residues R151, K175, H246, R249, and H272. Y281 acts as the O-(3'-phospho-DNA)-tyrosine intermediate in catalysis.

Belongs to the 'phage' integrase family. XerC subfamily. Forms a cyclic heterotetrameric complex composed of two molecules of XerC and two molecules of XerD.

It is found in the cytoplasm. In terms of biological role, site-specific tyrosine recombinase, which acts by catalyzing the cutting and rejoining of the recombining DNA molecules. The XerC-XerD complex is essential to convert dimers of the bacterial chromosome into monomers to permit their segregation at cell division. It also contributes to the segregational stability of plasmids. The protein is Tyrosine recombinase XerC of Mycobacterium sp. (strain JLS).